A 111-amino-acid chain; its full sequence is UPF0060 membrane protein NFA_36830 (111 aa).

4 helical membrane-spanning segments follow: residues 7–27, 33–53, 62–82, and 91–111; these read LVLFGLAALAEIGGAWLVWQG, GLWWIAAGVIALGAYGFVATF, VLAAYGGVFVVGSLAWGVLVD, and LLGAGICLVGVAVIMYAPRGG.

The protein belongs to the UPF0060 family.

Its subcellular location is the cell membrane. In Nocardia farcinica (strain IFM 10152), this protein is UPF0060 membrane protein NFA_36830.